A 134-amino-acid polypeptide reads, in one-letter code: Ethylmalonyl-CoA/methylmalonyl-CoA epimerase (134 aa).

A VOC domain is found at 4-134 (RLNHVAIAVP…NGCLVELEQV (131 aa)). The Co(2+) site is built by His7, His79, and Glu130. Glu130 acts as the Proton donor/acceptor in catalysis.

Belongs to the methylmalonyl-CoA epimerase family. Co(2+) serves as cofactor. The cofactor is Mn(2+).

It carries out the reaction (2R)-ethylmalonyl-CoA = (2S)-ethylmalonyl-CoA. It catalyses the reaction (R)-methylmalonyl-CoA = (S)-methylmalonyl-CoA. Functionally, promiscuous isomerase that catalyzes epimerization of both ethylmalonyl-CoA and methylmalonyl-CoA. Has thus a dual role in the ethylmalonyl-CoA pathway for acetyl-CoA assimilation required for R.sphaeroides growth on acetate as sole carbon source. This is Ethylmalonyl-CoA/methylmalonyl-CoA epimerase from Cereibacter sphaeroides (strain ATCC 17023 / DSM 158 / JCM 6121 / CCUG 31486 / LMG 2827 / NBRC 12203 / NCIMB 8253 / ATH 2.4.1.) (Rhodobacter sphaeroides).